Here is a 381-residue protein sequence, read N- to C-terminus: 40-kDa huntingtin-associated protein (381 aa).

Residue A2 is modified to N-acetylalanine. The Nuclear localization signal motif lies at K34–R36. The disordered stretch occupies residues E213 to G260. Over residues P218–S230 the composition is skewed to low complexity. The segment covering V231–R242 has biased composition (pro residues).

Interacts with HTT (via C-terminus). Interacts with RAB5A. Found in a complex with F8A1/F8A2/F8A3, HTT and RAB5A; mediates the recruitment of HTT by RAB5A onto early endosomes.

It is found in the cytoplasm. It localises to the nucleus. The protein localises to the early endosome. Its subcellular location is the nuclear body. Its function is as follows. RAB5A effector molecule that is involved in vesicular trafficking of early endosomes. Mediates the recruitment of HTT by RAB5A onto early endosomes. The HTT-F8A1/F8A2/F8A3-RAB5A complex stimulates early endosomal interaction with actin filaments and inhibits interaction with microtubules, leading to the reduction of endosome motility. The chain is 40-kDa huntingtin-associated protein (F8a1) from Rattus norvegicus (Rat).